A 1477-amino-acid chain; its full sequence is Lysine-specific demethylase rbr-2 (1477 aa).

Residues 1-37 (MRARRQENSISTPSAPSTSTSPRKKASIGNSRSKNHG) are disordered. The segment covering 9–21 (SISTPSAPSTSTS) has biased composition (low complexity). A JmjN domain is found at 56–97 (APIYYPTEEEFSDPIEYVAKIRHEAEKFGVVKIVPPANFKPP). One can recognise an ARID domain in the interval 121–218 (VKEKHTFIDR…HIEPFNRNLK (98 aa)). The segment at 222-314 (MKNDDESDDE…KAEGDDDDDE (93 aa)) is disordered. The segment covering 246-259 (MRTEIEVPNDKTTE) has biased composition (basic and acidic residues). 2 stretches are compositionally biased toward basic residues: residues 272-283 (GRRRSKNKKASS) and 295-304 (NSTRGRKNKK). Residues 319–371 (QVFCVACNEGKDEDLLLLCDIDGCNNGRHTYCCDPVLDEVPEGEWRCPKCIES) form a PHD-type 1 zinc finger. The JmjC domain occupies 468-634 (QYASHAWNLN…KGRECVESYS (167 aa)). Residues His514, Asp517, and His602 each contribute to the Fe cation site. The stretch at 874–926 (IIDKLEKWMEQVEMWRNRAKDAIYREQEYSKEEIEKIIEEGDEYDIKLEEIDE) forms a coiled coil. The segment at 1203–1257 (LEACSCLGFNKSDDSESTLTCIMCDSEFHVRCCEWSPFLEKLPEGCFLCVRCLRG) adopts a PHD-type 2 zinc-finger fold. Positions 1375–1404 (TAKRKRPSVSHKETSKKSRKRQSQASPSEY) are disordered. The segment at 1411-1466 (FKSCQARACLKPYGDSVNWVMCEAGCKNWFHVICLGFTLREINDMHEYRCSSCLDH) adopts a PHD-type 3 zinc-finger fold.

It belongs to the JARID1 histone demethylase family. The cofactor is Fe(2+).

The protein resides in the nucleus. The enzyme catalyses N(6),N(6),N(6)-trimethyl-L-lysyl(4)-[histone H3] + 3 2-oxoglutarate + 3 O2 = L-lysyl(4)-[histone H3] + 3 formaldehyde + 3 succinate + 3 CO2. Its function is as follows. Histone demethylase that specifically demethylates 'Lys-4' of histone H3, thereby playing a central role in histone code. Does not demethylate histone H3 'Lys-9', H3 'Lys-27', H3 'Lys-36', H3 'Lys-79' or H4 'Lys-20'. Demethylates trimethylated and dimethylated but not monomethylated H3 'Lys-4'. Required for normal longevity of the soma in a germline-dependent manner. Implicated in the epigenetic inheritance of lifespan over several generations. Involved in larval development and vulva formation. The polypeptide is Lysine-specific demethylase rbr-2 (rbr-2) (Caenorhabditis elegans).